The chain runs to 61 residues: Small ribosomal subunit protein uS14 (61 aa).

Residues cysteine 24, cysteine 27, cysteine 40, and cysteine 43 each contribute to the Zn(2+) site.

It belongs to the universal ribosomal protein uS14 family. Zinc-binding uS14 subfamily. Part of the 30S ribosomal subunit. Contacts proteins S3 and S10. Zn(2+) is required as a cofactor.

Functionally, binds 16S rRNA, required for the assembly of 30S particles and may also be responsible for determining the conformation of the 16S rRNA at the A site. The chain is Small ribosomal subunit protein uS14 from Clostridium novyi (strain NT).